The chain runs to 362 residues: Chorismate synthase (362 aa).

NADP(+) is bound at residue Arg47. Residues 124–126 (RSS), Gly286, 301–305 (KPTAT), and Arg327 each bind FMN.

This sequence belongs to the chorismate synthase family. As to quaternary structure, homotetramer. It depends on FMNH2 as a cofactor.

The enzyme catalyses 5-O-(1-carboxyvinyl)-3-phosphoshikimate = chorismate + phosphate. The protein operates within metabolic intermediate biosynthesis; chorismate biosynthesis; chorismate from D-erythrose 4-phosphate and phosphoenolpyruvate: step 7/7. Its function is as follows. Catalyzes the anti-1,4-elimination of the C-3 phosphate and the C-6 proR hydrogen from 5-enolpyruvylshikimate-3-phosphate (EPSP) to yield chorismate, which is the branch point compound that serves as the starting substrate for the three terminal pathways of aromatic amino acid biosynthesis. This reaction introduces a second double bond into the aromatic ring system. The protein is Chorismate synthase of Synechococcus sp. (strain ATCC 27144 / PCC 6301 / SAUG 1402/1) (Anacystis nidulans).